Reading from the N-terminus, the 525-residue chain is Protein nucleotidyltransferase YdiU (525 aa).

ATP-binding residues include glycine 107, glycine 109, arginine 110, lysine 129, aspartate 141, glycine 142, arginine 192, and arginine 199. The Proton acceptor role is filled by aspartate 268. Positions 269 and 278 each coordinate Mg(2+). Aspartate 278 is a binding site for ATP.

The protein belongs to the SELO family. Mg(2+) serves as cofactor. Mn(2+) is required as a cofactor.

It carries out the reaction L-seryl-[protein] + ATP = 3-O-(5'-adenylyl)-L-seryl-[protein] + diphosphate. The catalysed reaction is L-threonyl-[protein] + ATP = 3-O-(5'-adenylyl)-L-threonyl-[protein] + diphosphate. It catalyses the reaction L-tyrosyl-[protein] + ATP = O-(5'-adenylyl)-L-tyrosyl-[protein] + diphosphate. The enzyme catalyses L-histidyl-[protein] + UTP = N(tele)-(5'-uridylyl)-L-histidyl-[protein] + diphosphate. It carries out the reaction L-seryl-[protein] + UTP = O-(5'-uridylyl)-L-seryl-[protein] + diphosphate. The catalysed reaction is L-tyrosyl-[protein] + UTP = O-(5'-uridylyl)-L-tyrosyl-[protein] + diphosphate. In terms of biological role, nucleotidyltransferase involved in the post-translational modification of proteins. It can catalyze the addition of adenosine monophosphate (AMP) or uridine monophosphate (UMP) to a protein, resulting in modifications known as AMPylation and UMPylation. This is Protein nucleotidyltransferase YdiU from Ralstonia nicotianae (strain ATCC BAA-1114 / GMI1000) (Ralstonia solanacearum).